Consider the following 278-residue polypeptide: Biotin synthase (278 aa).

The 227-residue stretch at 1–227 (MQIMLCAISN…QSVVMVAGGR (227 aa)) folds into the Radical SAM core domain. 3 residues coordinate [4Fe-4S] cluster: C16, C20, and C23. [2Fe-2S] cluster is bound by residues C60, N96, and C154.

Belongs to the radical SAM superfamily. Biotin synthase family. As to quaternary structure, homodimer. [4Fe-4S] cluster serves as cofactor. It depends on [2Fe-2S] cluster as a cofactor.

It catalyses the reaction (4R,5S)-dethiobiotin + (sulfur carrier)-SH + 2 reduced [2Fe-2S]-[ferredoxin] + 2 S-adenosyl-L-methionine = (sulfur carrier)-H + biotin + 2 5'-deoxyadenosine + 2 L-methionine + 2 oxidized [2Fe-2S]-[ferredoxin]. It participates in cofactor biosynthesis; biotin biosynthesis; biotin from 7,8-diaminononanoate: step 2/2. Catalyzes the conversion of dethiobiotin (DTB) to biotin by the insertion of a sulfur atom into dethiobiotin via a radical-based mechanism. The protein is Biotin synthase of Campylobacter jejuni subsp. jejuni serotype O:2 (strain ATCC 700819 / NCTC 11168).